The chain runs to 293 residues: Biphenyl-2,3-diol 1,2-dioxygenase (293 aa).

2 consecutive VOC domains span residues 5-119 and 143-265; these read RLGY…IYYG and GIGH…FGWG. 3 residues coordinate Fe cation: H146, H210, and E261.

It belongs to the extradiol ring-cleavage dioxygenase family. Homooctamer. The cofactor is Fe(2+).

The enzyme catalyses biphenyl-2,3-diol + O2 = 2-hydroxy-6-oxo-6-phenylhexa-2,4-dienoate + H(+). It participates in xenobiotic degradation; biphenyl degradation; 2-hydroxy-2,4-pentadienoate and benzoate from biphenyl: step 3/4. The sequence is that of Biphenyl-2,3-diol 1,2-dioxygenase (bphC) from Pseudomonas sp. (strain KKS102).